A 143-amino-acid chain; its full sequence is Transcriptional regulator MraZ (143 aa).

SpoVT-AbrB domains are found at residues 5 to 47 and 76 to 119; these read EYEH…PRSV and AADM…APRR.

The protein belongs to the MraZ family. In terms of assembly, forms oligomers.

It localises to the cytoplasm. It is found in the nucleoid. The chain is Transcriptional regulator MraZ from Roseiflexus sp. (strain RS-1).